A 221-amino-acid chain; its full sequence is NADH-ubiquinone oxidoreductase chain 6 (221 aa).

The next 5 membrane-spanning stretches (helical) occupy residues 18 to 38, 44 to 64, 74 to 94, 107 to 127, and 195 to 215; these read FVEYILDIFSIMAFLTGIYVI, IVSVLFLILLFGGISSYLNII, IIVYIGAVSILFLFILMLINI, IPLTIFIGIIFSNFLFPMLPY, and IWLIIASFILLLAMVGSIVIT.

This sequence belongs to the complex I subunit 6 family.

Its subcellular location is the mitochondrion membrane. It catalyses the reaction a ubiquinone + NADH + 5 H(+)(in) = a ubiquinol + NAD(+) + 4 H(+)(out). Functionally, core subunit of the mitochondrial membrane respiratory chain NADH dehydrogenase (Complex I) that is believed to belong to the minimal assembly required for catalysis. Complex I functions in the transfer of electrons from NADH to the respiratory chain. The immediate electron acceptor for the enzyme is believed to be ubiquinone. This is NADH-ubiquinone oxidoreductase chain 6 (ND6) from Podospora anserina (strain S / ATCC MYA-4624 / DSM 980 / FGSC 10383) (Pleurage anserina).